We begin with the raw amino-acid sequence, 168 residues long: Desumoylating isopeptidase 1 (168 aa).

The region spanning 7 to 149 (YPVKLYVYDL…FGQALRPFLD (143 aa)) is the PPPDE domain. Residue H38 is part of the active site. The short motif at 83–91 (IFLEYLSSL) is the Nuclear export signal 1 element. C108 is an active-site residue. Positions 139-153 (PFGQALRPFLDSIQI) match the Nuclear export signal 2 motif.

Belongs to the DeSI family. In terms of assembly, homodimer. Interacts with UBQLN4; leading to the export of UBQLN4 from the nucleus.

Its subcellular location is the cytoplasm. It localises to the nucleus. The enzyme catalyses S-hexadecanoyl-L-cysteinyl-[protein] + H2O = L-cysteinyl-[protein] + hexadecanoate + H(+). Protease which deconjugates SUMO1, SUMO2 and SUMO3 from some substrate proteins. Has isopeptidase but not SUMO-processing activity. Desumoylates ZBTB46. Collaborates with UBQLN4 in the export of ubiquitinated proteins from the nucleus to the cytoplasm. Exhibits palmitoyl protein thioesterase (S-depalmitoylation) activity towards synthetic substrates 4-methylumbelliferyl-6-S-palmitoyl-beta-D-glucopyranoside and S-depalmitoylation probe 5 (DPP-5). This Rattus norvegicus (Rat) protein is Desumoylating isopeptidase 1 (Desi1).